We begin with the raw amino-acid sequence, 920 residues long: Phosphoenolpyruvate carboxylase (920 aa).

Residues histidine 138 and lysine 583 contribute to the active site.

Belongs to the PEPCase type 1 family. Mg(2+) is required as a cofactor.

The enzyme catalyses oxaloacetate + phosphate = phosphoenolpyruvate + hydrogencarbonate. In terms of biological role, forms oxaloacetate, a four-carbon dicarboxylic acid source for the tricarboxylic acid cycle. The protein is Phosphoenolpyruvate carboxylase of Streptococcus pyogenes serotype M1.